Consider the following 341-residue polypeptide: DNA-directed RNA polymerase subunit alpha (341 aa).

The tract at residues 1-237 (MLSLSKNWNA…EQLQLFISFE (237 aa)) is alpha N-terminal domain (alpha-NTD). The alpha C-terminal domain (alpha-CTD) stretch occupies residues 247-341 (TDALPFSPYL…LSKRYEDSYN (95 aa)).

Belongs to the RNA polymerase alpha chain family. In terms of assembly, homodimer. The RNAP catalytic core consists of 2 alpha, 1 beta, 1 beta' and 1 omega subunit. When a sigma factor is associated with the core the holoenzyme is formed, which can initiate transcription.

The enzyme catalyses RNA(n) + a ribonucleoside 5'-triphosphate = RNA(n+1) + diphosphate. Its function is as follows. DNA-dependent RNA polymerase catalyzes the transcription of DNA into RNA using the four ribonucleoside triphosphates as substrates. In Rickettsia bellii (strain RML369-C), this protein is DNA-directed RNA polymerase subunit alpha.